Consider the following 152-residue polypeptide: Ribosome maturation factor RimP (152 aa).

This sequence belongs to the RimP family.

It is found in the cytoplasm. Required for maturation of 30S ribosomal subunits. In Proteus mirabilis (strain HI4320), this protein is Ribosome maturation factor RimP.